Consider the following 167-residue polypeptide: MAAARPVLARALLQQCLFARLQVKPPEHGAEAEWEEIQRGLVIYICFFKGADEDLVPKIVNVLLNVKLSEDENGEYVSVLDLPGNVLIIPQATLGGKLKGRKMQYHTNIEKEKGMELYSQFVSLCEKELAANPKCMEAGVLVKHGTYGNRQVLKLDTNGPYTHLVEF.

The Gly-transPro motif, allows the protein to recognize chirality of D-amino acids motif lies at 159–160 (GP).

Belongs to the DTD family. Homodimer.

The protein localises to the cytoplasm. It catalyses the reaction a D-aminoacyl-tRNA + H2O = a tRNA + a D-alpha-amino acid + H(+). It carries out the reaction glycyl-tRNA(Ala) + H2O = tRNA(Ala) + glycine + H(+). The enzyme catalyses D-tyrosyl-tRNA(Tyr) + H2O = D-tyrosine + tRNA(Tyr). The catalysed reaction is L-alanyl-tRNA(Thr) + H2O = tRNA(Thr) + L-alanine + H(+). Deacylates mischarged D-aminoacyl-tRNAs. Also deacylates mischarged glycyl-tRNA(Ala), protecting cells against glycine mischarging by AlaRS. Probably acts by rejecting L-amino acids from its binding site rather than specific recognition of D-amino acids. Catalyzes the hydrolysis of D-tyrosyl-tRNA(Tyr), has no activity on correctly charged L-tyrosyl-tRNA(Tyr). By recycling D-aminoacyl-tRNA to D-amino acids and free tRNA molecules, this enzyme counteracts the toxicity associated with the formation of D-aminoacyl-tRNA entities in vivo and helps enforce protein L-homochirality. In contrast to DTD1, deacylates L-Ala mischarged on tRNA(Thr)(G4.U69) by alanine-tRNA ligase AARS. Can deacylate L-Ala due to a relaxed specificity for substrate chirality caused by the trans conformation of the Gly-Pro motif in the active site. Also hydrolyzes correctly charged, achiral, glycyl-tRNA(Gly) in vitro, although in vivo EEF1A1/EF-Tu may protect cognate achiral glycyl-tRNA(Gly) from DTD2-mediated deacetylation. The chain is D-aminoacyl-tRNA deacylase 2 (DTD2) from Gallus gallus (Chicken).